The primary structure comprises 103 residues: Flagellar hook-basal body complex protein FliE (103 aa).

The protein belongs to the FliE family.

It is found in the bacterial flagellum basal body. The protein is Flagellar hook-basal body complex protein FliE of Cronobacter sakazakii (strain ATCC BAA-894) (Enterobacter sakazakii).